The primary structure comprises 763 residues: MSELLSFALFLASVLIYAWKAGRNTWWFAATLTVLGLFVVLNITLFASDYFTGDGINDAVLYTLTNSLTGAGVSKYILPGIGIVLGLTAVFGALGWILRRRRHHPHHFGYSLLALLLALGSVDASPAFRQITELVKSQSRDGDPDFAAYYKEPSKTIPDPKLNLVYIYGESLERTYFDNEAFPDLTPELGALKNEGLDFSHTQQLPGTDYTIAGMVASQCGIPLFAPFEGNASASVSSFFPQNICLGDILKNSGYQNYFVQGANLRFAGKDVFLKSHGFDHLYGSEELKSVVADPHYRNDWGFYDDTVLDEAWKKFEELSRSGQRFSLFTLTVDTHHPDGFISRTCNRKKYDFDGKPNQSFSAVSCSQENIATFINKIKASPWFKDTVIVVSSDHLAMNNTAWKYLNKQDRNNLFFVIRGDKPQQETLAVKRNTMDNGATVLDILGGDNYLGLGRSSLSGQSMSEIFLNIKEKTLAWKPDIIRLWKFPKEMKEFTIDQQKNMIAFSGSHFRLPLLLRVSDKRVEPLPESEYSAPLRFQLADFAPRDNFVWVDRCYKMAQLWAPELALSTDWCVSQGQLGGQQIVQHVDKTTWKSKTAFKDTVIDMARYKGNVDTLKIVDNDIRYKADSFIFNVAGAPEEVKQFSGISRPESWGRWSNAQLGDEVKIEYKHPLPKKFDLVITAKAYGNNASRPIPVRVGNEEQTLVLGNEVTTTTLHFDNPTDADTLVIVPPEPVSTNEGNILGHSPRKLGIGMVEIKVVEREG.

The next 4 helical transmembrane spans lie at 4–19, 26–48, 76–98, and 105–127; these read LLSFALFLASVLIYAW, WWFAATLTVLGLFVVLNITLFAS, YILPGIGIVLGLTAVFGALGWIL, and PHHFGYSLLALLLALGSVDASPA.

This sequence belongs to the OpgB family.

It is found in the cell inner membrane. The catalysed reaction is a phosphatidylglycerol + a membrane-derived-oligosaccharide D-glucose = a 1,2-diacyl-sn-glycerol + a membrane-derived-oligosaccharide 6-(glycerophospho)-D-glucose.. Its pathway is glycan metabolism; osmoregulated periplasmic glucan (OPG) biosynthesis. Its function is as follows. Transfers a phosphoglycerol residue from phosphatidylglycerol to the membrane-bound nascent glucan backbones. The chain is Phosphoglycerol transferase I from Escherichia coli O157:H7.